We begin with the raw amino-acid sequence, 327 residues long: Malate dehydrogenase 1 (327 aa).

Residue 12–18 (GAAGQIA) coordinates NAD(+). Substrate contacts are provided by R93 and R99. Residues N106, Q113, and 130-132 (VGN) each bind NAD(+). Residues N132 and R163 each contribute to the substrate site. Residue H188 is the Proton acceptor of the active site.

Belongs to the LDH/MDH superfamily. MDH type 2 family.

The catalysed reaction is (S)-malate + NAD(+) = oxaloacetate + NADH + H(+). Catalyzes the reversible oxidation of malate to oxaloacetate. This Burkholderia thailandensis (strain ATCC 700388 / DSM 13276 / CCUG 48851 / CIP 106301 / E264) protein is Malate dehydrogenase 1.